The chain runs to 597 residues: Elongation factor 4 (597 aa).

One can recognise a tr-type G domain in the interval 2 to 184; that stretch reads KHIRNFSIIA…NIVSAIPAPE (183 aa). Residues 14–19 and 131–134 each bind GTP; these read DHGKST and NKID.

The protein belongs to the TRAFAC class translation factor GTPase superfamily. Classic translation factor GTPase family. LepA subfamily.

It is found in the cell inner membrane. The catalysed reaction is GTP + H2O = GDP + phosphate + H(+). In terms of biological role, required for accurate and efficient protein synthesis under certain stress conditions. May act as a fidelity factor of the translation reaction, by catalyzing a one-codon backward translocation of tRNAs on improperly translocated ribosomes. Back-translocation proceeds from a post-translocation (POST) complex to a pre-translocation (PRE) complex, thus giving elongation factor G a second chance to translocate the tRNAs correctly. Binds to ribosomes in a GTP-dependent manner. The protein is Elongation factor 4 of Vibrio parahaemolyticus serotype O3:K6 (strain RIMD 2210633).